The primary structure comprises 163 residues: NADH-quinone oxidoreductase subunit I (163 aa).

2 4Fe-4S ferredoxin-type domains span residues 54–84 (LRRYPNGEERCIACKLCEAVCPAQAITIDAE) and 94–123 (TRYDIDMTKCIYCGFCQEACPVDAIVEGPN). Residues Cys-64, Cys-67, Cys-70, Cys-74, Cys-103, Cys-106, Cys-109, and Cys-113 each contribute to the [4Fe-4S] cluster site.

Belongs to the complex I 23 kDa subunit family. As to quaternary structure, NDH-1 is composed of at least 14 different subunits, Nqo1 to Nqo14. The complex has a L-shaped structure, with the hydrophobic arm (subunits Nqo7, Nqo8, Nqo10 to Nqo14) embedded in the inner membrane and the hydrophilic peripheral arm (subunits Nqo1 to Nqo6, Nqo9) protruding into the bacterial cytoplasm. The hydrophilic domain contains all the redox centers. NADH-quinone oxidoreductase forms a supercomplex with ubiquinol-cytochrome c reductase complex (complex III or cytochrome b-c1 complex) and cytochrome c oxidase (complex IV), which stabilizes the NADH-quinone oxidoreductase complex. Requires [4Fe-4S] cluster as cofactor.

The protein resides in the cell inner membrane. The catalysed reaction is a quinone + NADH + 5 H(+)(in) = a quinol + NAD(+) + 4 H(+)(out). Its function is as follows. NDH-1 shuttles electrons from NADH, via FMN and iron-sulfur (Fe-S) centers, to quinones in the respiratory chain. The immediate electron acceptor for the enzyme in this species is believed to be ubiquinone. Couples the redox reaction to proton translocation (for every two electrons transferred, four hydrogen ions are translocated across the cytoplasmic membrane), and thus conserves the redox energy in a proton gradient. The protein is NADH-quinone oxidoreductase subunit I of Paracoccus denitrificans (strain Pd 1222).